The following is a 222-amino-acid chain: Deoxyribose-phosphate aldolase (222 aa).

The active-site Proton donor/acceptor is the Asp-92. The Schiff-base intermediate with acetaldehyde role is filled by Lys-156. The active-site Proton donor/acceptor is Lys-185.

The protein belongs to the DeoC/FbaB aldolase family. DeoC type 1 subfamily. As to quaternary structure, homodimer.

It localises to the cytoplasm. It carries out the reaction 2-deoxy-D-ribose 5-phosphate = D-glyceraldehyde 3-phosphate + acetaldehyde. It participates in carbohydrate degradation; 2-deoxy-D-ribose 1-phosphate degradation; D-glyceraldehyde 3-phosphate and acetaldehyde from 2-deoxy-alpha-D-ribose 1-phosphate: step 2/2. Shows high stability to high concentrations of acetaldehyde. In terms of biological role, catalyzes a reversible aldol reaction between acetaldehyde and D-glyceraldehyde 3-phosphate to generate 2-deoxy-D-ribose 5-phosphate. In Aciduliprofundum boonei (strain DSM 19572 / T469), this protein is Deoxyribose-phosphate aldolase.